A 425-amino-acid polypeptide reads, in one-letter code: Serine--tRNA ligase (425 aa).

230–232 (TAE) is a binding site for L-serine. An ATP-binding site is contributed by 261 to 263 (RSE). E284 is a binding site for L-serine. Residue 348–351 (EISS) participates in ATP binding. Position 384 (S384) interacts with L-serine.

Belongs to the class-II aminoacyl-tRNA synthetase family. Type-1 seryl-tRNA synthetase subfamily. Homodimer. The tRNA molecule binds across the dimer.

It is found in the cytoplasm. It catalyses the reaction tRNA(Ser) + L-serine + ATP = L-seryl-tRNA(Ser) + AMP + diphosphate + H(+). It carries out the reaction tRNA(Sec) + L-serine + ATP = L-seryl-tRNA(Sec) + AMP + diphosphate + H(+). Its pathway is aminoacyl-tRNA biosynthesis; selenocysteinyl-tRNA(Sec) biosynthesis; L-seryl-tRNA(Sec) from L-serine and tRNA(Sec): step 1/1. Catalyzes the attachment of serine to tRNA(Ser). Is also able to aminoacylate tRNA(Sec) with serine, to form the misacylated tRNA L-seryl-tRNA(Sec), which will be further converted into selenocysteinyl-tRNA(Sec). This chain is Serine--tRNA ligase, found in Streptococcus equi subsp. equi (strain 4047).